The chain runs to 78 residues: Large ribosomal subunit protein bL28 (78 aa).

Positions 1–29 (MSAHCQVTGRQPSFGKSVSHSHRRTSRRW) are disordered.

This sequence belongs to the bacterial ribosomal protein bL28 family.

This chain is Large ribosomal subunit protein bL28, found in Corynebacterium efficiens (strain DSM 44549 / YS-314 / AJ 12310 / JCM 11189 / NBRC 100395).